We begin with the raw amino-acid sequence, 91 residues long: Secretoglobin family 3A member 2 (91 aa).

A signal peptide spans 1 to 21 (MKLVSIFLLVTIGICGYSATA).

The protein belongs to the secretoglobin family. UGRP subfamily. As to quaternary structure, homodimer; disulfide-linked. Monomer. Interacts with APOA1. Highly expressed in lung where it localizes to epithelial cells of the trachea, bronchus and bronchioles (at protein level). Expressed in club cells of the bronchioles. Also detected in the anterior and posterior lobes of the pituitary gland where it may localize to gonadotropic cells (at protein level). Not detected in other tissues tested.

The protein localises to the secreted. Functionally, secreted cytokine-like protein. Binds to the scavenger receptor MARCO. Can also bind to pathogens including the Gram-positive bacterium L.monocytogenes, the Gram-negative bacterium P.aeruginosa, and yeast. Strongly inhibits phospholipase A2 (PLA2G1B) activity. Seems to have anti-inflammatory effects in respiratory epithelium. Also has anti-fibrotic activity in lung. May play a role in fetal lung development and maturation. Promotes branching morphogenesis during early stages of lung development. In the pituitary, may inhibit production of follicle-stimulating hormone (FSH) and luteinizing hormone (LH). The polypeptide is Secretoglobin family 3A member 2 (Scgb3a2) (Mus musculus (Mouse)).